The following is a 368-amino-acid chain: Heme A synthase (368 aa).

5 helical membrane passes run 14–34 (AVRIWLTLVAALIAVMVLVGG), 104–124 (VIGIVYLLPFLWFLWRGAIGP), 129–149 (ALWIIFALGALQGAVGWWMVA), 161–181 (VRLATHLSLALIIYAAIVWTL), and 200–220 (ALALLGLTFVQLYAGALVAGL). Heme is bound at residue histidine 264. The next 3 helical transmembrane spans lie at 266–283 (MLAYALWTLAALHMIDAL), 296–316 (FLALTAQATLGIFTVLYAAPI), and 318–338 (LALVHQAMALVVLTLAVLQAE). Position 322 (histidine 322) interacts with heme.

The protein belongs to the COX15/CtaA family. Type 2 subfamily. Interacts with CtaB. The cofactor is heme b.

It is found in the cell membrane. It catalyses the reaction Fe(II)-heme o + 2 A + H2O = Fe(II)-heme a + 2 AH2. It functions in the pathway porphyrin-containing compound metabolism; heme A biosynthesis; heme A from heme O: step 1/1. Its function is as follows. Catalyzes the conversion of heme O to heme A by two successive hydroxylations of the methyl group at C8. The first hydroxylation forms heme I, the second hydroxylation results in an unstable dihydroxymethyl group, which spontaneously dehydrates, resulting in the formyl group of heme A. This is Heme A synthase from Rhodopseudomonas palustris (strain ATCC BAA-98 / CGA009).